Consider the following 787-residue polypeptide: Patatin-like phospholipase domain-containing protein OOU_Y34scaffold00095g16.3 (787 aa).

Disordered regions lie at residues 47–69 (APDTTQPPDDGLASPRSPSARSF) and 137–164 (KVVGSQTHRQKKSSRRRKRSKAVAPGRR). Residues 59–69 (ASPRSPSARSF) are compositionally biased toward low complexity. The span at 144-157 (HRQKKSSRRRKRSK) shows a compositional bias: basic residues. Residues 180 to 200 (WPFLLIVGAWIVGLAVTYLFT) form a helical membrane-spanning segment. The PNPLA domain maps to 375-566 (LCLSGGASFA…RTDIPIRALN (192 aa)). A GXSXG motif is present at residues 406–410 (GTSGG). The active-site Nucleophile is Ser408. Catalysis depends on Asp553, which acts as the Proton acceptor. Residues 745 to 787 (GTDEEITTNDEMEFASDEKAVLTEDEGQFDGVTDNTEGSPLLK) are disordered. The span at 746–759 (TDEEITTNDEMEFA) shows a compositional bias: acidic residues. The segment covering 777–787 (TDNTEGSPLLK) has biased composition (polar residues).

It belongs to the PLPL family.

The protein localises to the membrane. In terms of biological role, probable lipid hydrolase. This chain is Patatin-like phospholipase domain-containing protein OOU_Y34scaffold00095g16.3, found in Pyricularia oryzae (strain Y34) (Rice blast fungus).